The sequence spans 267 residues: Tryptophan synthase alpha chain (267 aa).

Active-site proton acceptor residues include Glu47 and Asp58.

Belongs to the TrpA family. In terms of assembly, tetramer of two alpha and two beta chains.

The enzyme catalyses (1S,2R)-1-C-(indol-3-yl)glycerol 3-phosphate + L-serine = D-glyceraldehyde 3-phosphate + L-tryptophan + H2O. Its pathway is amino-acid biosynthesis; L-tryptophan biosynthesis; L-tryptophan from chorismate: step 5/5. In terms of biological role, the alpha subunit is responsible for the aldol cleavage of indoleglycerol phosphate to indole and glyceraldehyde 3-phosphate. This is Tryptophan synthase alpha chain from Prosthecochloris aestuarii (strain DSM 271 / SK 413).